Consider the following 343-residue polypeptide: DNA repair and recombination protein RadA (343 aa).

Residue 107 to 114 participates in ATP binding; it reads GEFGAGKS.

The protein belongs to the eukaryotic RecA-like protein family.

Its function is as follows. Involved in DNA repair and in homologous recombination. Binds and assemble on single-stranded DNA to form a nucleoprotein filament. Hydrolyzes ATP in a ssDNA-dependent manner and promotes DNA strand exchange between homologous DNA molecules. In Halobacterium salinarum (strain ATCC 29341 / DSM 671 / R1), this protein is DNA repair and recombination protein RadA.